A 188-amino-acid chain; its full sequence is Scytalone dehydratase (188 aa).

Residues Tyr27, Tyr47, and Phe50 each contribute to the substrate site. Residues His82 and His107 contribute to the active site. Asn128 is a binding site for substrate.

Belongs to the scytalone dehydratase family. In terms of assembly, homotrimer. Each subunit contains an active site, located in the central part of the hydrophobic core of the monomer, which functions independently.

It is found in the endosome. The enzyme catalyses scytalone = 1,3,8-trihydroxynaphthalene + H2O. Its pathway is pigment biosynthesis; melanin biosynthesis. Carpropamid acts as an efficient inhibitor of scytalone dehydratase activity. Functionally, scytalone dehydratase; part of the gene cluster that mediates the biosynthesis of dihydroxynaphthalene (DHN)-melanin, a bluish-green pigment and a structural component of the conidial wall. Within the pathway, catalyzes the dehydration of scytalone as well as of vermelone. This is Scytalone dehydratase from Colletotrichum orbiculare (strain 104-T / ATCC 96160 / CBS 514.97 / LARS 414 / MAFF 240422) (Cucumber anthracnose fungus).